Consider the following 456-residue polypeptide: Hydroxymethylglutaryl-CoA synthase ERG13 (456 aa).

Position 35 (A35) interacts with (3S)-3-hydroxy-3-methylglutaryl-CoA. E86 functions as the Proton donor/acceptor in the catalytic mechanism. (3S)-3-hydroxy-3-methylglutaryl-CoA-binding residues include C118, N156, T160, S210, H259, K268, N336, and S370. The Acyl-thioester intermediate role is filled by C118. The Proton donor/acceptor role is filled by H259.

Belongs to the thiolase-like superfamily. HMG-CoA synthase family.

The enzyme catalyses acetoacetyl-CoA + acetyl-CoA + H2O = (3S)-3-hydroxy-3-methylglutaryl-CoA + CoA + H(+). It functions in the pathway metabolic intermediate biosynthesis; (R)-mevalonate biosynthesis; (R)-mevalonate from acetyl-CoA: step 2/3. Hydroxymethylglutaryl-CoA synthase; part of the first module of ergosterol biosynthesis pathway that includes the early steps of the pathway, conserved across all eukaryotes, and which results in the formation of mevalonate from acetyl-coenzyme A (acetyl-CoA). ERG13 condenses acetyl-CoA with acetoacetyl-CoA to form hydroxymethylglutaryl-CoA (HMG-CoA). The first module starts with the action of the cytosolic acetyl-CoA acetyltransferase ERG10B that catalyzes the formation of acetoacetyl-CoA. The hydroxymethylglutaryl-CoA synthases ERG13 then condenses acetyl-CoA with acetoacetyl-CoA to form HMG-CoA. The rate-limiting step of the early module is the reduction to mevalonate by the 3-hydroxy-3-methylglutaryl-coenzyme A (HMG-CoA) reductases HMG1. This Gibberella zeae (strain ATCC MYA-4620 / CBS 123657 / FGSC 9075 / NRRL 31084 / PH-1) (Wheat head blight fungus) protein is Hydroxymethylglutaryl-CoA synthase ERG13.